The chain runs to 292 residues: Carbapenem-hydrolyzing beta-lactamase transcriptional activator (292 aa).

Residues 5-62 (IPLNALRAFEASARYLNFTKAGLELHVSQAAVSQHVRTLEAILGVNLFKRLPRGLQLT) form the HTH lysR-type domain. The segment at residues 22–41 (FTKAGLELHVSQAAVSQHVR) is a DNA-binding region (H-T-H motif).

The protein belongs to the LysR transcriptional regulatory family.

In terms of biological role, this protein is a positive regulator of gene expression of carbapenem-hydrolyzing beta-lactamase (smeA). Seems to also be a repressor of its own transcription. The sequence is that of Carbapenem-hydrolyzing beta-lactamase transcriptional activator (smeR) from Serratia marcescens.